The following is a 262-amino-acid chain: Cutinase 1 (262 aa).

Poly(ethylene terephthalate) is bound at residue Tyr-61. Ser-131 serves as the catalytic Nucleophile. Poly(ethylene terephthalate) contacts are provided by Met-132 and Trp-156. Residues Asp-177 and His-209 each act as charge relay system in the active site. Cys-242 and Cys-260 form a disulfide bridge.

This sequence belongs to the AB hydrolase superfamily.

It is found in the secreted. It localises to the periplasm. The catalysed reaction is (ethylene terephthalate)(n) + H2O = (ethylene terephthalate)(n-1) + 4-[(2-hydroxyethoxy)carbonyl]benzoate + H(+). The enzyme catalyses a butanoate ester + H2O = an aliphatic alcohol + butanoate + H(+). It catalyses the reaction an acetyl ester + H2O = an aliphatic alcohol + acetate + H(+). It carries out the reaction cutin + H2O = cutin monomers.. Catalyzes the hydrolysis of cutin, a polyester that forms the structure of plant cuticle. Shows esterase activity towards p-nitrophenol-linked aliphatic esters (pNP-aliphatic esters). Capable of degrading the plastic poly(ethylene terephthalate) (PET), the most abundant polyester plastic in the world. Capable of degrading the bioplastic poly(lactic acid) (PLLA). The protein is Cutinase 1 of Thermobifida cellulosilytica.